We begin with the raw amino-acid sequence, 376 residues long: Queuine tRNA-ribosyltransferase (376 aa).

The active-site Proton acceptor is D93. Substrate contacts are provided by residues 93–97 (DSGGF), D147, Q190, and G217. The interval 248-254 (GVGKPGD) is RNA binding. D267 acts as the Nucleophile in catalysis. The Zn(2+) site is built by C305, C307, C310, and H336.

This sequence belongs to the queuine tRNA-ribosyltransferase family. As to quaternary structure, homodimer. Within each dimer, one monomer is responsible for RNA recognition and catalysis, while the other monomer binds to the replacement base PreQ1. Zn(2+) serves as cofactor.

It catalyses the reaction 7-aminomethyl-7-carbaguanine + guanosine(34) in tRNA = 7-aminomethyl-7-carbaguanosine(34) in tRNA + guanine. The protein operates within tRNA modification; tRNA-queuosine biosynthesis. Its function is as follows. Catalyzes the base-exchange of a guanine (G) residue with the queuine precursor 7-aminomethyl-7-deazaguanine (PreQ1) at position 34 (anticodon wobble position) in tRNAs with GU(N) anticodons (tRNA-Asp, -Asn, -His and -Tyr). Catalysis occurs through a double-displacement mechanism. The nucleophile active site attacks the C1' of nucleotide 34 to detach the guanine base from the RNA, forming a covalent enzyme-RNA intermediate. The proton acceptor active site deprotonates the incoming PreQ1, allowing a nucleophilic attack on the C1' of the ribose to form the product. After dissociation, two additional enzymatic reactions on the tRNA convert PreQ1 to queuine (Q), resulting in the hypermodified nucleoside queuosine (7-(((4,5-cis-dihydroxy-2-cyclopenten-1-yl)amino)methyl)-7-deazaguanosine). The polypeptide is Queuine tRNA-ribosyltransferase (Dinoroseobacter shibae (strain DSM 16493 / NCIMB 14021 / DFL 12)).